Reading from the N-terminus, the 1563-residue chain is NACHT domain- and WD repeat-containing protein 1 (1563 aa).

One copy of the WD 1 repeat lies at 274–314 (TNHQVLEQLRELELARQELGWLYQEIRHHLWQSTESTKVFC). One can recognise an NACHT domain in the interval 336–666 (TPLVLFGPPG…HRQLSQVIQV (331 aa)). 342 to 349 (GPPGIGKT) provides a ligand contact to ATP. WD repeat units lie at residues 866 to 905 (GCHK…VVHV), 908 to 947 (GHTA…EKVT), 954 to 994 (QNPT…LVFC), 998 to 1037 (DVSD…LQEK), 1044 to 1082 (KEET…LLEK), 1126 to 1165 (EHED…TLLN), 1168 to 1207 (EGVG…KLQS), 1212 to 1251 (LDRT…EQDC), 1253 to 1292 (DTSN…DVLC), 1346 to 1385 (QLPE…FPLE), 1386 to 1425 (AHGS…GMFE), and 1431 to 1470 (SCCR…LLAV). Residues 1534–1563 (AAEASQDAEPVAVEGKESKSNKRSQVCLIL) are disordered.

As to quaternary structure, may interact with HSP90AA1, HSP90AB1 and BAG2.

It localises to the cytoplasm. It is found in the cytosol. May play a role in the control of androgen receptor (AR) protein steady-state levels. This Mus musculus (Mouse) protein is NACHT domain- and WD repeat-containing protein 1 (Nwd1).